The chain runs to 359 residues: Putative nucleotidyltransferase MAB21L1 (359 aa).

A ribonucleoside 5'-triphosphate is bound by residues 23 to 24 (RK) and 63 to 66 (YEGL). Residues Glu-73 and Glu-75 each coordinate Mg(2+). A ribonucleoside 5'-triphosphate is bound by residues Lys-248 and 252 to 255 (SILK).

The protein belongs to the mab-21 family. As to quaternary structure, monomer. Homodecamer; composed of 2 back to back homopentamers. The protein may exist as monomer in solution and oiligomerizes upon ligand binding.

It localises to the nucleus. Functionally, putative nucleotidyltransferase required for several aspects of embryonic development including normal development of the eye. It is unclear whether it displays nucleotidyltransferase activity in vivo. Binds single-stranded RNA (ssRNA). In Bos taurus (Bovine), this protein is Putative nucleotidyltransferase MAB21L1 (MAB21L1).